The following is a 245-amino-acid chain: CTD nuclear envelope phosphatase 1B (245 aa).

The helical transmembrane segment at 7–29 (CLLGVRTFHGVTSRIWSFFLYIL) threads the bilayer. Residues 58 to 225 (NNVKRKILVL…LNLLPMLDAL (168 aa)) enclose the FCP1 homology domain.

Belongs to the dullard family.

Its subcellular location is the endoplasmic reticulum membrane. The protein resides in the nucleus membrane. It catalyses the reaction O-phospho-L-seryl-[protein] + H2O = L-seryl-[protein] + phosphate. The catalysed reaction is O-phospho-L-threonyl-[protein] + H2O = L-threonyl-[protein] + phosphate. Serine/threonine protein phosphatase that may dephosphorylate and activate lipins. Lipins are phosphatidate phosphatases that catalyze the conversion of phosphatidic acid to diacylglycerol and control the metabolism of fatty acids at different levels. May indirectly modulate the lipid composition of nuclear and/or endoplasmic reticulum membranes and be required for proper nuclear membrane morphology and/or dynamics. May also indirectly regulate the production of lipid droplets and triacylglycerol. May antagonize BMP signaling. The sequence is that of CTD nuclear envelope phosphatase 1B (ctdnep1b) from Danio rerio (Zebrafish).